The following is a 356-amino-acid chain: MTDSSHDGVPAPRRILLVTGLSGAGKSSILRILEDLGYEVIDNPPLGMMDEIVTRAEQPVAIGVDSRTRGFDAAAVLAALGRLRVNPDLQAELIYATAEESVLLRRYTATRRRHPLAMRGTVKEGIEAEIELTARLRAAADMVIDTSDLPPPELRQVVEMRFAPRHDRMAEGLTVALMSFAFPAGLPREADMVFDARFLRNPYYDPDLSVRNGLDQAVADYVASDPDYPRFLDQIDGMLGLVLPRFVREGKKYATIAIGCSGGRHRSVTLVEALARRLAAKNLAEPGGTCDSPGKPAHIEKGAAPTDVQSGGADAQGAWPIIVMHRELARQGRSSWRWASRPREHAADVVEGQYSS.

20-27 (GLSGAGKS) serves as a coordination point for ATP. 65-68 (DSRT) serves as a coordination point for GTP. The disordered stretch occupies residues 285–313 (EPGGTCDSPGKPAHIEKGAAPTDVQSGGA).

It belongs to the RapZ-like family.

Its function is as follows. Displays ATPase and GTPase activities. The protein is Nucleotide-binding protein GDI1189/Gdia_1902 of Gluconacetobacter diazotrophicus (strain ATCC 49037 / DSM 5601 / CCUG 37298 / CIP 103539 / LMG 7603 / PAl5).